Here is a 300-residue protein sequence, read N- to C-terminus: Recombination-associated protein RdgC (300 aa).

It belongs to the RdgC family.

Its subcellular location is the cytoplasm. The protein resides in the nucleoid. Its function is as follows. May be involved in recombination. The protein is Recombination-associated protein RdgC of Janthinobacterium sp. (strain Marseille) (Minibacterium massiliensis).